A 285-amino-acid chain; its full sequence is Urease accessory protein UreD (285 aa).

It belongs to the UreD family. UreD, UreF and UreG form a complex that acts as a GTP-hydrolysis-dependent molecular chaperone, activating the urease apoprotein by helping to assemble the nickel containing metallocenter of UreC. The UreE protein probably delivers the nickel.

The protein resides in the cytoplasm. Its function is as follows. Required for maturation of urease via the functional incorporation of the urease nickel metallocenter. The polypeptide is Urease accessory protein UreD (Azoarcus sp. (strain BH72)).